We begin with the raw amino-acid sequence, 201 residues long: Nascent polypeptide-associated complex subunit alpha (201 aa).

Over residues 1–20 (MANPRVEELPDEEVKKTVVD) the composition is skewed to basic and acidic residues. 2 disordered regions span residues 1–51 (MANP…SRNE) and 118–165 (AQQL…IEDK). Residues 21–36 (DHDDDSSSDSDGEEET) show a composition bias toward acidic residues. The 66-residue stretch at 48–113 (SRNEKKARKA…AKIEDLNASA (66 aa)) folds into the NAC-A/B domain. The span at 126–149 (GHDHDHAGHSHGEAKASEGDAKKE) shows a compositional bias: basic and acidic residues. Positions 150–161 (EEDDDEEVDADG) are enriched in acidic residues. A UBA domain is found at 162-200 (IEDKDIELVMTQAGVSRTKAIKALKENDNDIVNSIMALS).

Belongs to the NAC-alpha family. In terms of assembly, part of the nascent polypeptide-associated complex (NAC), consisting of EGD2 and EGD1. NAC associates with ribosomes via EGD1.

It is found in the cytoplasm. Its subcellular location is the nucleus. Its function is as follows. Component of the nascent polypeptide-associated complex (NAC), a dynamic component of the ribosomal exit tunnel, protecting the emerging polypeptides from interaction with other cytoplasmic proteins to ensure appropriate nascent protein targeting. The NAC complex also promotes mitochondrial protein import by enhancing productive ribosome interactions with the outer mitochondrial membrane and blocks the inappropriate interaction of ribosomes translating non-secretory nascent polypeptides with translocation sites in the membrane of the endoplasmic reticulum. EGD2 may also be involved in transcription regulation. This chain is Nascent polypeptide-associated complex subunit alpha (EGD2), found in Pyricularia oryzae (strain 70-15 / ATCC MYA-4617 / FGSC 8958) (Rice blast fungus).